The chain runs to 112 residues: Putative regulatory protein DP2861 (112 aa).

Belongs to the RemA family.

This is Putative regulatory protein DP2861 from Desulfotalea psychrophila (strain LSv54 / DSM 12343).